We begin with the raw amino-acid sequence, 711 residues long: Progesterone receptor (711 aa).

The segment at Met-1–Ile-347 is modulating, Pro-Rich. 2 consecutive NR C4-type zinc fingers follow at residues Cys-348–Cys-368 and Cys-384–Cys-408. Positions Cys-348–Phe-420 form a DNA-binding region, nuclear receptor. The region spanning Gln-457–Ile-691 is the NR LBD domain.

Belongs to the nuclear hormone receptor family. NR3 subfamily. In terms of tissue distribution, expressed in all tissues examined: highly expressed in testis and brain. Also expressed in heart, lung, liver, kidney, stomach and small intestine.

The protein localises to the nucleus. In terms of biological role, the steroid hormones and their receptors are involved in the regulation of eukaryotic gene expression and affect cellular proliferation and differentiation in target tissues. The sequence is that of Progesterone receptor (pgr) from Rana dybowskii (Dybovsky's frog).